A 193-amino-acid chain; its full sequence is Phosphoheptose isomerase (193 aa).

In terms of domain architecture, SIS spans leucine 37–alanine 193. Asparagine 52–glycine 54 is a binding site for substrate. 2 residues coordinate Zn(2+): histidine 61 and glutamate 65. Substrate-binding positions include glutamate 65, asparagine 93–aspartate 94, serine 119–serine 121, serine 124, and glutamine 172. 2 residues coordinate Zn(2+): glutamine 172 and histidine 180.

This sequence belongs to the SIS family. GmhA subfamily. As to quaternary structure, homotetramer. Requires Zn(2+) as cofactor.

The protein localises to the cytoplasm. The catalysed reaction is 2 D-sedoheptulose 7-phosphate = D-glycero-alpha-D-manno-heptose 7-phosphate + D-glycero-beta-D-manno-heptose 7-phosphate. The protein operates within carbohydrate biosynthesis; D-glycero-D-manno-heptose 7-phosphate biosynthesis; D-glycero-alpha-D-manno-heptose 7-phosphate and D-glycero-beta-D-manno-heptose 7-phosphate from sedoheptulose 7-phosphate: step 1/1. In terms of biological role, catalyzes the isomerization of sedoheptulose 7-phosphate in D-glycero-D-manno-heptose 7-phosphate. The sequence is that of Phosphoheptose isomerase from Yersinia enterocolitica serotype O:8 / biotype 1B (strain NCTC 13174 / 8081).